The sequence spans 500 residues: NAD(P)H-quinone oxidoreductase chain 4, chloroplastic (500 aa).

14 consecutive transmembrane segments (helical) span residues 4–24 (FPWLTLIVVLPISAGSLIFFL), 37–57 (IFICMLELLLTTYVFCYHFQL), 87–107 (IGPILLTGFITTLATLAAWPV), 113–130 (LFHFLMLAMYSGQIGSFS), 134–154 (LLLFFIMWELELIPVYLLLSM), 167–187 (FILYTAGGSIFLLLGVLGIGL), 208–228 (ALEIIFYIGFFIAFAVKSPII), 242–262 (HYSTCMLLAGILLKMGAYGLV), 272–292 (AHSIFSPWLVVVGTMQIIYAA), 305–325 (IAYSSVSHMGFIIIGIGSITD), 330–350 (GAILQIISHGFLGAALFFLAG), 386–406 (LALPGMSGFVAELIVFFGIIT), 416–436 (ILITFVMAIGMILTPIYSLSM), and 462–482 (LFVLISIFLPVIGIGIYPDFV).

It belongs to the complex I subunit 4 family.

It is found in the plastid. It localises to the chloroplast thylakoid membrane. It carries out the reaction a plastoquinone + NADH + (n+1) H(+)(in) = a plastoquinol + NAD(+) + n H(+)(out). The catalysed reaction is a plastoquinone + NADPH + (n+1) H(+)(in) = a plastoquinol + NADP(+) + n H(+)(out). In Vitis vinifera (Grape), this protein is NAD(P)H-quinone oxidoreductase chain 4, chloroplastic.